A 486-amino-acid polypeptide reads, in one-letter code: Ribulose bisphosphate carboxylase large chain (486 aa).

The substrate site is built by N126 and T176. The Proton acceptor role is filled by K178. Substrate is bound at residue K180. Mg(2+) is bound by residues K204, D206, and E207. K204 carries the N6-carboxylysine modification. H296 acts as the Proton acceptor in catalysis. Substrate is bound by residues R297, H329, and S381.

The protein belongs to the RuBisCO large chain family. Type I subfamily. In terms of assembly, heterohexadecamer of 8 large chains and 8 small chains. Requires Mg(2+) as cofactor.

It carries out the reaction 2 (2R)-3-phosphoglycerate + 2 H(+) = D-ribulose 1,5-bisphosphate + CO2 + H2O. The catalysed reaction is D-ribulose 1,5-bisphosphate + O2 = 2-phosphoglycolate + (2R)-3-phosphoglycerate + 2 H(+). RuBisCO catalyzes two reactions: the carboxylation of D-ribulose 1,5-bisphosphate, the primary event in carbon dioxide fixation, as well as the oxidative fragmentation of the pentose substrate. Both reactions occur simultaneously and in competition at the same active site. This is Ribulose bisphosphate carboxylase large chain from Rhizobium meliloti (strain 1021) (Ensifer meliloti).